The following is a 209-amino-acid chain: N-acetyltransferase aca1 (209 aa).

In terms of domain architecture, N-acetyltransferase spans 26 to 202 (TNVKNKEELL…DAYIYQYHFP (177 aa)). Asn-118 serves as a coordination point for substrate. A CoA-binding site is contributed by 128–133 (RSKGIG). A substrate-binding site is contributed by 155–156 (NL).

It belongs to the acetyltransferase family. Homodimer.

The protein localises to the cytoplasm. Its subcellular location is the mitochondrion. The enzyme catalyses L-glutamate 5-semialdehyde + acetyl-CoA = N-acetyl-L-glutamate 5-semialdehyde + CoA + H(+). N-acetyltransferase involved in oxidative stress resistance. Acetylates the toxic proline metabolism intermediate (S)-1-pyrroline-5-carboxylate (P5C), or more likely its spontaneously forming tautomer glutamate-5-semialdehyde (GSA) into N-acetyl-GSA for arginine synthesis in the mitochondria. P5C has been shown to increase the levels of reactive oxygen species (ROS) in the cell by inhibiting the function of the respiratory chain in the mitochondria. The enzyme is able to reduce intracellular ROS levels under P5C-induced oxidative stress and protects cells from damage by oxidative stress. Also acetylates and thereby detoxifies the proline analog azetidine-2-carboxylate (AZC), however it is unlikely that AZC is a natural substrate as it occurs only in plants belonging to the Lilaceae family. This chain is N-acetyltransferase aca1, found in Schizosaccharomyces pombe (strain 972 / ATCC 24843) (Fission yeast).